Reading from the N-terminus, the 394-residue chain is uncharacterized protein (394 aa).

A run of 8 helical transmembrane segments spans residues 22–42 (VLVS…VLLH), 60–80 (LALF…LLLF), 81–101 (GFTG…APVA), 231–251 (LHLA…YLWL), 271–291 (GFCA…QLAP), 303–323 (LFLV…GDWP), 328–348 (LLGV…APWL), and 355–375 (ALGP…HAWM).

The protein localises to the cell membrane. This is an uncharacterized protein from Pseudomonas aeruginosa (strain ATCC 15692 / DSM 22644 / CIP 104116 / JCM 14847 / LMG 12228 / 1C / PRS 101 / PAO1).